We begin with the raw amino-acid sequence, 538 residues long: Phosphoenolpyruvate carboxykinase (ATP) (538 aa).

Residues Arg64, Tyr205, and Lys211 each contribute to the substrate site. Residues Lys211, His230, and 246 to 254 contribute to the ATP site; that span reads GLSGTGKTT. 2 residues coordinate Mn(2+): Lys211 and His230. Asp267 contributes to the Mn(2+) binding site. Residues Glu295, Arg331, 447–448, and Thr453 contribute to the ATP site; that span reads RI. A substrate-binding site is contributed by Arg331.

This sequence belongs to the phosphoenolpyruvate carboxykinase (ATP) family. Monomer. Mn(2+) serves as cofactor.

The protein resides in the cytoplasm. It catalyses the reaction oxaloacetate + ATP = phosphoenolpyruvate + ADP + CO2. It functions in the pathway carbohydrate biosynthesis; gluconeogenesis. Involved in the gluconeogenesis. Catalyzes the conversion of oxaloacetate (OAA) to phosphoenolpyruvate (PEP) through direct phosphoryl transfer between the nucleoside triphosphate and OAA. In Baumannia cicadellinicola subsp. Homalodisca coagulata, this protein is Phosphoenolpyruvate carboxykinase (ATP).